A 357-amino-acid chain; its full sequence is MTLWVVKLGTSLLRGDTAATIEGYASGLAAAMRRGDQVVLVTSGAVGLGCQKLHLPKRPDTVVALQAAAATGQGYLMALYERAMAVHGLSVAQVLLTRSDLVDRRRYQNASGTLQQLLAWGVLPVINENDALSSAELRFGDNDTLSALVAAAVGAHQLLLLTDVDRLYSSDPRSDANAQPITDVHHPRDLKWLEAGAGDGGRWGTGGMTTKLAAARIATASGVTVHLADGRDPARLAGLLEGDRGGTVFHPHPEPLGNRRSWLAHVLVPEGELCLDQGACQALLHRGASLLLVGVTAVKGQFEANRPVLLRDPDGQELGRGLCTLNSNQVRQALSVVTDAEASPVVVHRDALVLQDR.

Residue K7 coordinates ATP. S43, D130, and N142 together coordinate substrate. ATP is bound by residues 162-163 (TD) and 205-211 (TGGMTTK). Residues 270–341 (EGELCLDQGA…QALSVVTDAE (72 aa)) form the PUA domain.

This sequence belongs to the glutamate 5-kinase family.

It is found in the cytoplasm. It catalyses the reaction L-glutamate + ATP = L-glutamyl 5-phosphate + ADP. It participates in amino-acid biosynthesis; L-proline biosynthesis; L-glutamate 5-semialdehyde from L-glutamate: step 1/2. Its function is as follows. Catalyzes the transfer of a phosphate group to glutamate to form L-glutamate 5-phosphate. This is Glutamate 5-kinase from Synechococcus sp. (strain CC9902).